Here is a 212-residue protein sequence, read N- to C-terminus: MSYYTKAKFFTSAPDIRHLKNDTGIEVAFAGRSNAGKSSALNTLTRQRNLARTSKTPGRTQLINVFELEEELRLVDLPGYGFAKVPVAMKKKWQASLGEYLQKRKSLKGLVVLMDIRHPFKDLDQDLIHWAVESNIPVLALLTKADKLKSGKRKAQLLMAQEAALAFMGDVTVQTFSSLNKHGLPELERILDGWFGLDKKSDEEGAVVEGQD.

The EngB-type G domain maps to 23–197; that stretch reads TGIEVAFAGR…ERILDGWFGL (175 aa). GTP is bound by residues 31-38, 58-62, 76-79, 143-146, and 176-178; these read GRSNAGKS, GRTQL, DLPG, TKAD, and FSS. 2 residues coordinate Mg(2+): Ser-38 and Thr-60.

Belongs to the TRAFAC class TrmE-Era-EngA-EngB-Septin-like GTPase superfamily. EngB GTPase family. Mg(2+) serves as cofactor.

Necessary for normal cell division and for the maintenance of normal septation. The polypeptide is Probable GTP-binding protein EngB (Alteromonas mediterranea (strain DSM 17117 / CIP 110805 / LMG 28347 / Deep ecotype)).